A 428-amino-acid polypeptide reads, in one-letter code: Serine--tRNA ligase (428 aa).

Position 236-238 (236-238 (TAE)) interacts with L-serine. 267–269 (RSE) is an ATP binding site. L-serine is bound at residue Glu290. 354–357 (EISS) contacts ATP. An L-serine-binding site is contributed by Ser388.

Belongs to the class-II aminoacyl-tRNA synthetase family. Type-1 seryl-tRNA synthetase subfamily. In terms of assembly, homodimer. The tRNA molecule binds across the dimer.

The protein resides in the cytoplasm. It catalyses the reaction tRNA(Ser) + L-serine + ATP = L-seryl-tRNA(Ser) + AMP + diphosphate + H(+). The enzyme catalyses tRNA(Sec) + L-serine + ATP = L-seryl-tRNA(Sec) + AMP + diphosphate + H(+). It participates in aminoacyl-tRNA biosynthesis; selenocysteinyl-tRNA(Sec) biosynthesis; L-seryl-tRNA(Sec) from L-serine and tRNA(Sec): step 1/1. Its function is as follows. Catalyzes the attachment of serine to tRNA(Ser). Is also able to aminoacylate tRNA(Sec) with serine, to form the misacylated tRNA L-seryl-tRNA(Sec), which will be further converted into selenocysteinyl-tRNA(Sec). The protein is Serine--tRNA ligase of Psychrobacter cryohalolentis (strain ATCC BAA-1226 / DSM 17306 / VKM B-2378 / K5).